A 415-amino-acid polypeptide reads, in one-letter code: Adipocyte plasma membrane-associated protein (415 aa).

Residues 1–39 are Cytoplasmic-facing; that stretch reads MNEPEGLRFRRLNRPHIITDETHEPQYKATSTYSGKVFR. The helical transmembrane segment at 40–60 threads the bilayer; that stretch reads VTLLTMVAFLLLPLLVVVFVL. Residues 61 to 412 are Extracellular-facing; it reads ESPIQPEVFS…RSPYLCKLDL (352 aa). N159 carries an N-linked (GlcNAc...) asparagine glycan.

This sequence belongs to the strictosidine synthase family.

The protein localises to the membrane. This chain is Adipocyte plasma membrane-associated protein (apmap), found in Danio rerio (Zebrafish).